The chain runs to 317 residues: Apolipoprotein E (317 aa).

Positions 1–18 (MKVLWAALLVTFLAGCQA) are cleaved as a signal peptide. A run of 8 repeats spans residues 80 to 101 (TLMD…EQLS), 102 to 123 (PVAE…ARLG), 124 to 145 (ADME…AMLG), 146 to 167 (QSTE…KRLL), 168 to 189 (RDAD…EGAE), 190 to 211 (RGVS…VRAA), 212 to 233 (TVGS…ERLR), and 234 to 255 (ARME…EQVA). The interval 80-255 (TLMDETMKEL…RLDEVKEQVA (176 aa)) is 8 X 22 AA approximate tandem repeats. Residue Met-143 is modified to Methionine sulfoxide. At Ser-147 the chain carries Phosphoserine. The tract at residues 158-168 (HLRKLRKRLLR) is LDL and other lipoprotein receptors binding. 162 to 165 (LRKR) contributes to the heparin binding site. The segment at 210–290 (AATVGSLAGQ…SWFEPLVEDM (81 aa)) is lipid-binding and lipoprotein association. 229-236 (GERLRARM) contributes to the heparin binding site. The interval 266–317 (QQISLQAEAFQARLKSWFEPLVEDMQRQWAGLVEKVQAAVGASTAPVPSDNH) is homooligomerization. The interval 278 to 290 (RLKSWFEPLVEDM) is specificity for association with VLDL.

It belongs to the apolipoprotein A1/A4/E family. In terms of assembly, homotetramer. May interact with ABCA1; functionally associated with ABCA1 in the biogenesis of HDLs. May interact with APP/A4 amyloid-beta peptide; the interaction is extremely stable in vitro but its physiological significance is unclear. May interact with MAPT. May interact with MAP2. In the cerebrospinal fluid, interacts with secreted SORL1. Interacts with PMEL; this allows the loading of PMEL luminal fragment on ILVs to induce fibril nucleation. Post-translationally, APOE exists as multiple glycosylated and sialylated glycoforms within cells and in plasma. The extent of glycosylation and sialylation are tissue and context specific. In terms of processing, glycated in plasma VLDL. Phosphorylated by FAM20C in the extracellular medium.

It is found in the secreted. Its subcellular location is the extracellular space. The protein localises to the extracellular matrix. The protein resides in the extracellular vesicle. It localises to the endosome. It is found in the multivesicular body. Its function is as follows. APOE is an apolipoprotein, a protein associating with lipid particles, that mainly functions in lipoprotein-mediated lipid transport between organs via the plasma and interstitial fluids. APOE is a core component of plasma lipoproteins and is involved in their production, conversion and clearance. Apolipoproteins are amphipathic molecules that interact both with lipids of the lipoprotein particle core and the aqueous environment of the plasma. As such, APOE associates with chylomicrons, chylomicron remnants, very low density lipoproteins (VLDL) and intermediate density lipoproteins (IDL) but shows a preferential binding to high-density lipoproteins (HDL). It also binds a wide range of cellular receptors including the LDL receptor/LDLR, the LDL receptor-related proteins LRP1, LRP2 and LRP8 and the very low-density lipoprotein receptor/VLDLR that mediate the cellular uptake of the APOE-containing lipoprotein particles. Finally, APOE also has a heparin-binding activity and binds heparan-sulfate proteoglycans on the surface of cells, a property that supports the capture and the receptor-mediated uptake of APOE-containing lipoproteins by cells. A main function of APOE is to mediate lipoprotein clearance through the uptake of chylomicrons, VLDLs, and HDLs by hepatocytes. APOE is also involved in the biosynthesis by the liver of VLDLs as well as their uptake by peripheral tissues ensuring the delivery of triglycerides and energy storage in muscle, heart and adipose tissues. By participating in the lipoprotein-mediated distribution of lipids among tissues, APOE plays a critical role in plasma and tissues lipid homeostasis. APOE is also involved in two steps of reverse cholesterol transport, the HDLs-mediated transport of cholesterol from peripheral tissues to the liver, and thereby plays an important role in cholesterol homeostasis. First, it is functionally associated with ABCA1 in the biogenesis of HDLs in tissues. Second, it is enriched in circulating HDLs and mediates their uptake by hepatocytes. APOE also plays an important role in lipid transport in the central nervous system, regulating neuron survival and sprouting. This chain is Apolipoprotein E (APOE), found in Colobus guereza (Mantled guereza).